Reading from the N-terminus, the 296-residue chain is Polyadenylate-binding protein 2 (296 aa).

Residues 1–102 (MAAVSSAASL…EEEPGELTGD (102 aa)) form a disordered region. Gly residues-rich tracts occupy residues 19–31 (LRGGAGPSGGGQD) and 71–82 (GRGGSGGGGAGG). The segment covering 84 to 97 (EELEDEELEEEEPG) has biased composition (acidic residues). The stretch at 107–141 (DPELEAIKARVREMEEEAEKLKELQNEVEKQMNMS) forms a coiled coil. Residues 146–296 (NAGPVIMSIE…ARVTSWYTPY (151 aa)) are necessary for homooligomerization. Residues 163-240 (RSIYVGNVDY…RQIKVVPKRT (78 aa)) enclose the RRM domain.

Monomer and homooligomer. Binds RNA as a monomer and oligomerizes when bound to poly(A).

Its subcellular location is the nucleus. The protein resides in the cytoplasm. Its function is as follows. Involved in the 3'-end formation of mRNA precursors (pre-mRNA) by the addition of a poly(A) tail of 200-250 nt to the upstream cleavage product. Stimulates poly(A) polymerase (PAPOLA) conferring processivity on the poly(A) tail elongation reaction and also controls the poly(A) tail length. Increases the affinity of poly(A) polymerase for RNA. Binds to poly(A) and to poly(G) with high affinity. May protect the poly(A) tail from degradation. The chain is Polyadenylate-binding protein 2 from Xenopus tropicalis (Western clawed frog).